The following is a 124-amino-acid chain: uncharacterized protein (124 aa).

The first 23 residues, methionine 1–alanine 23, serve as a signal peptide directing secretion.

The protein belongs to the cytochrome b562 family.

This is an uncharacterized protein from Pasteurella multocida (strain Pm70).